The sequence spans 815 residues: DNA gyrase subunit B (815 aa).

Residues 1–21 (MEKTPATGSAVAPPPVEYGTD) are disordered. Residues 430–545 (SELYIVEGDS…AISTSRSRRS (116 aa)) enclose the Toprim domain. Mg(2+)-binding residues include Glu436, Asp509, and Asp511.

This sequence belongs to the type II topoisomerase GyrB family. In terms of assembly, heterotetramer, composed of two GyrA and two GyrB chains. In the heterotetramer, GyrA contains the active site tyrosine that forms a transient covalent intermediate with DNA, while GyrB binds cofactors and catalyzes ATP hydrolysis. Mg(2+) serves as cofactor. Requires Mn(2+) as cofactor. Ca(2+) is required as a cofactor.

The protein localises to the cytoplasm. The enzyme catalyses ATP-dependent breakage, passage and rejoining of double-stranded DNA.. In terms of biological role, a type II topoisomerase that negatively supercoils closed circular double-stranded (ds) DNA in an ATP-dependent manner to modulate DNA topology and maintain chromosomes in an underwound state. Negative supercoiling favors strand separation, and DNA replication, transcription, recombination and repair, all of which involve strand separation. Also able to catalyze the interconversion of other topological isomers of dsDNA rings, including catenanes and knotted rings. Type II topoisomerases break and join 2 DNA strands simultaneously in an ATP-dependent manner. The polypeptide is DNA gyrase subunit B (Myxococcus xanthus).